We begin with the raw amino-acid sequence, 544 residues long: Chaperonin GroEL (544 aa).

ATP contacts are provided by residues 29-32 (TLGP), 86-90 (DGTTT), glycine 413, 476-478 (NAA), and aspartate 492.

This sequence belongs to the chaperonin (HSP60) family. In terms of assembly, forms a cylinder of 14 subunits composed of two heptameric rings stacked back-to-back. Interacts with the co-chaperonin GroES.

The protein localises to the cytoplasm. It carries out the reaction ATP + H2O + a folded polypeptide = ADP + phosphate + an unfolded polypeptide.. Its function is as follows. Together with its co-chaperonin GroES, plays an essential role in assisting protein folding. The GroEL-GroES system forms a nano-cage that allows encapsulation of the non-native substrate proteins and provides a physical environment optimized to promote and accelerate protein folding. The chain is Chaperonin GroEL from Bacillus anthracis (strain A0248).